Reading from the N-terminus, the 452-residue chain is Protein CLT3, chloroplastic (452 aa).

The transit peptide at methionine 1 to arginine 34 directs the protein to the chloroplast. 10 consecutive transmembrane segments (helical) span residues alanine 105–tyrosine 125, phenylalanine 137–phenylalanine 157, proline 175–alanine 195, threonine 202–glycine 222, isoleucine 230–alanine 250, glycine 258–leucine 278, phenylalanine 307–phenylalanine 327, glycine 353–leucine 373, threonine 389–alanine 409, and leucine 412–tryptophan 432.

The protein belongs to the CRT-like transporter family.

Its subcellular location is the plastid. The protein localises to the chloroplast membrane. Its function is as follows. Involved in thiol transport from the plastid to the cytosol. Transports probably both glutathione (GSH) and its precursor, gamma-glutamylcysteine (gamma-EC). Exhibits some functional redundancy with CLT1 in maintaining the root GSH pool. This chain is Protein CLT3, chloroplastic, found in Arabidopsis thaliana (Mouse-ear cress).